The sequence spans 327 residues: MSRHWTIAVLGAGAWGTALALTMQRAGHGARLWARDQNLVREINNARSNSRYLPGVKIDPAVLATDDMAAALEGADCVLAAIPAQSLRSVLAVAGTALKAHIPVVLCAKGIERETGQLMSEAARQALPENPLAALSGPSFAADLARGLPTAVTVAAQDGALAADLAKKLSAPNLRCYSSDDLMGVELGGALKNVLAIAAGATSGAGLGASAVAAITTRGFVELRRIGAAFGARAETLMGLSGLGDLILTCNSPQSRNFAYGAALGRGERLDNLPLAEGVFTASIAARMVSERGLEAPIIETVNGMLNGGLTVHAAMQALLARPLKSE.

NADPH is bound by residues tryptophan 15, arginine 35, and lysine 109. Sn-glycerol 3-phosphate-binding residues include lysine 109, glycine 137, and serine 139. Alanine 141 serves as a coordination point for NADPH. Lysine 192, aspartate 245, serine 255, arginine 256, and asparagine 257 together coordinate sn-glycerol 3-phosphate. Lysine 192 functions as the Proton acceptor in the catalytic mechanism. Arginine 256 lines the NADPH pocket. 2 residues coordinate NADPH: leucine 275 and glutamate 277.

The protein belongs to the NAD-dependent glycerol-3-phosphate dehydrogenase family.

It is found in the cytoplasm. It catalyses the reaction sn-glycerol 3-phosphate + NAD(+) = dihydroxyacetone phosphate + NADH + H(+). The catalysed reaction is sn-glycerol 3-phosphate + NADP(+) = dihydroxyacetone phosphate + NADPH + H(+). Its pathway is membrane lipid metabolism; glycerophospholipid metabolism. Its function is as follows. Catalyzes the reduction of the glycolytic intermediate dihydroxyacetone phosphate (DHAP) to sn-glycerol 3-phosphate (G3P), the key precursor for phospholipid synthesis. The polypeptide is Glycerol-3-phosphate dehydrogenase [NAD(P)+] (Chelativorans sp. (strain BNC1)).